We begin with the raw amino-acid sequence, 190 residues long: Threonylcarbamoyl-AMP synthase (190 aa).

Residues 7–190 enclose the YrdC-like domain; it reads GDAIAAAIDV…ALTGELFRQG (184 aa).

This sequence belongs to the SUA5 family. TsaC subfamily.

The protein resides in the cytoplasm. The enzyme catalyses L-threonine + hydrogencarbonate + ATP = L-threonylcarbamoyladenylate + diphosphate + H2O. Required for the formation of a threonylcarbamoyl group on adenosine at position 37 (t(6)A37) in tRNAs that read codons beginning with adenine. Catalyzes the conversion of L-threonine, HCO(3)(-)/CO(2) and ATP to give threonylcarbamoyl-AMP (TC-AMP) as the acyladenylate intermediate, with the release of diphosphate. In Escherichia coli O6:H1 (strain CFT073 / ATCC 700928 / UPEC), this protein is Threonylcarbamoyl-AMP synthase.